The following is a 60-amino-acid chain: Large ribosomal subunit protein uL30 (60 aa).

It belongs to the universal ribosomal protein uL30 family. In terms of assembly, part of the 50S ribosomal subunit.

This Burkholderia ambifaria (strain MC40-6) protein is Large ribosomal subunit protein uL30.